We begin with the raw amino-acid sequence, 190 residues long: Xanthine phosphoribosyltransferase (190 aa).

Residues L20 and N27 each contribute to the xanthine site. 128-132 lines the 5-phospho-alpha-D-ribose 1-diphosphate pocket; it reads ANGHA. Position 156 (K156) interacts with xanthine.

This sequence belongs to the purine/pyrimidine phosphoribosyltransferase family. Xpt subfamily. As to quaternary structure, homodimer.

It localises to the cytoplasm. It catalyses the reaction XMP + diphosphate = xanthine + 5-phospho-alpha-D-ribose 1-diphosphate. It participates in purine metabolism; XMP biosynthesis via salvage pathway; XMP from xanthine: step 1/1. Functionally, converts the preformed base xanthine, a product of nucleic acid breakdown, to xanthosine 5'-monophosphate (XMP), so it can be reused for RNA or DNA synthesis. In Pseudomonas aeruginosa (strain ATCC 15692 / DSM 22644 / CIP 104116 / JCM 14847 / LMG 12228 / 1C / PRS 101 / PAO1), this protein is Xanthine phosphoribosyltransferase.